The primary structure comprises 650 residues: XK-related protein 4 (650 aa).

Residues 1 to 15 (MAAKSDGRLKMKKSS) show a composition bias toward basic and acidic residues. The disordered stretch occupies residues 1–44 (MAAKSDGRLKMKKSSDVAFTPLQNSDHSGSVQGLAPGLPSGSGA). The span at 21-31 (PLQNSDHSGSV) shows a compositional bias: polar residues. A run of 2 helical transmembrane segments spans residues 114 to 134 (WILA…WLAV) and 144 to 164 (WFGL…VFSF). At serine 200 the chain carries Phosphoserine. A disordered region spans residues 200–238 (SAAGEGEARPSTPQRQASNASKSNIAAANSGSNSSGATR). A compositionally biased stretch (low complexity) spans 216-238 (ASNASKSNIAAANSGSNSSGATR). 8 helical membrane passes run 248–268 (CSFC…GQIW), 306–326 (HLLA…CIIV), 331–351 (LQAL…WALA), 365–385 (KPIS…TIAA), 396–418 (VFQL…WIVH), 428–448 (WEEI…WFNV), 457–477 (LFIY…LWYL), and 487–507 (FAIP…VFML).

Belongs to the XK family. In terms of assembly, homodimer; homodimerization takes place upon caspase cleavage. Interacts with the processed C-terminus of XRCC4 (protein XRCC4, C-terminus); interaction promotes the phospholipid scramblase activity. Post-translationally, undergoes proteolytic processing by caspase-3 (CASP3), caspase-6 (CASP6) and caspase-7 (CASP7) to generate the XK-related protein 4, processed form, leading to its activation.

Its subcellular location is the cell membrane. The catalysed reaction is a 1,2-diacyl-sn-glycero-3-phospho-L-serine(in) = a 1,2-diacyl-sn-glycero-3-phospho-L-serine(out). With respect to regulation, phospholipid scramblase activity is activated upon caspase cleavage to generate the XK-related protein 4, processed form. Does not act prior the onset of apoptosis. Its activity is regulated as follows. Homodimerizes upon caspase cleavage. Phospholipid scramblase activity is activated following interaction with the processed C-terminus of XRCC4 (protein XRCC4, C-terminus). Phospholipid scramblase that promotes phosphatidylserine exposure on apoptotic cell surface. Phosphatidylserine is a specific marker only present at the surface of apoptotic cells and acts as a specific signal for engulfment. The polypeptide is XK-related protein 4 (Homo sapiens (Human)).